The sequence spans 156 residues: Ribonuclease pancreatic (156 aa).

An N-terminal signal peptide occupies residues methionine 1 to glycine 28. Residues lysine 35 and arginine 38 each contribute to the substrate site. Histidine 40 acts as the Proton acceptor in catalysis. N-linked (GlcNAc...) asparagine glycosylation is found at asparagine 50 and asparagine 62. 4 disulfide bridges follow: cysteine 54-cysteine 112, cysteine 68-cysteine 123, cysteine 86-cysteine 138, and cysteine 93-cysteine 100. Residues lysine 69–threonine 73 and lysine 94 each bind substrate. A glycan (N-linked (GlcNAc...) asparagine) is linked at asparagine 104. Residue arginine 113 coordinates substrate. Histidine 147 (proton donor) is an active-site residue.

It belongs to the pancreatic ribonuclease family. As to quaternary structure, monomer. Interacts with and forms tight 1:1 complexes with RNH1. Dimerization of two such complexes may occur. Interaction with RNH1 inhibits this protein. In terms of tissue distribution, pancreas and other tissues and body fluids (indicating it may have other physiological functions besides its role in digestion).

It localises to the secreted. It carries out the reaction an [RNA] containing cytidine + H2O = an [RNA]-3'-cytidine-3'-phosphate + a 5'-hydroxy-ribonucleotide-3'-[RNA].. It catalyses the reaction an [RNA] containing uridine + H2O = an [RNA]-3'-uridine-3'-phosphate + a 5'-hydroxy-ribonucleotide-3'-[RNA].. Its function is as follows. Endonuclease that catalyzes the cleavage of RNA on the 3' side of pyrimidine nucleotides. Acts on single-stranded and double-stranded RNA. In Pongo pygmaeus (Bornean orangutan), this protein is Ribonuclease pancreatic (RNASE1).